A 145-amino-acid chain; its full sequence is Small ribosomal subunit protein bS6 (145 aa).

This sequence belongs to the bacterial ribosomal protein bS6 family.

In terms of biological role, binds together with bS18 to 16S ribosomal RNA. This chain is Small ribosomal subunit protein bS6, found in Mycoplasmopsis agalactiae (strain NCTC 10123 / CIP 59.7 / PG2) (Mycoplasma agalactiae).